The following is a 1416-amino-acid chain: Tiny macrocysts protein B (1416 aa).

The next 8 helical transmembrane spans lie at 47–67 (ILTILSMLIEFCQLSSFGFKH), 93–113 (FGYLGFTILFWIAVGLLILGF), 140–160 (FVSFSVAVLFIPIISLLLIGL), 185–205 (ANLPIAVISIILIVVFSIVAF), 231–251 (VTVLFAKFVFAFFNSLVDFVP), 253–273 (LTSITFFVFMVILTFGSIIVL), 285–305 (SGFYTVVLWVSFMTLVTMGIN), and 315–335 (ITIVGVFFAFPIGFFSNMFYF). The span at 356 to 372 (LKDANKKGKRNSVEKES) shows a compositional bias: basic and acidic residues. Disordered stretches follow at residues 356 to 377 (LKDANKKGKRNSVEKESSPTSK) and 662 to 691 (IEKSGSKSGSSKSKDDSSESSSSSKGRRGK). A run of 2 helical transmembrane segments spans residues 706-726 (WLMIGTTCCCIIFLIVVLVVF) and 953-973 (AILYTWCGIFAVLFLICAVLF). Disordered regions lie at residues 1018-1103 (RDNL…RPLM) and 1119-1144 (NVRLQAKDEEITNGGGERKGSDATRT). Residues 1024–1039 (TTDDDGRDDHLGEDDN) are compositionally biased toward acidic residues. Composition is skewed to low complexity over residues 1048–1062 (NNNNNNNNNNNNNNN) and 1083–1094 (SSSGSNVLNTSS). The span at 1123–1144 (QAKDEEITNGGGERKGSDATRT) shows a compositional bias: basic and acidic residues. Helical transmembrane passes span 1179–1199 (ILATFLLFGFITMGIWVTFTV), 1325–1345 (WFLALIDYIFIGLDTATFTYF), and 1358–1378 (VLTAILSVSCVILLVVHVVLF).

It is found in the membrane. Functionally, regulator of the cAMP signaling pathway specific to sexual development. Controls the levels of external cAMP by regulating the expression of phosphodiesterase pdsA and its inhibitor pdiA. The chain is Tiny macrocysts protein B (tmcB) from Dictyostelium discoideum (Social amoeba).